The following is a 486-amino-acid chain: Monocarboxylate transporter 12 (486 aa).

Over 1 to 9 (MTKITRVSL) the chain is Cytoplasmic. The next 12 membrane-spanning stretches (helical) occupy residues 10 to 30 (ASPP…LVTI), 58 to 78 (AWIH…GSVV), 86 to 106 (AGIM…SFAT), 115 to 135 (LGVL…AMVG), 148 to 168 (IAMS…QLLI), 177 to 197 (LLIL…MRPI), 253 to 273 (FVVL…LFVY), 289 to 309 (AFLM…FGWL), 320 to 340 (YVCY…LPML), 353 to 373 (FGYF…EIVG), 383 to 403 (VVYF…GWLV), and 410 to 430 (TAAF…LGFV). Topologically, residues 431–486 (RIVKRMKRTQVPFPVKDSDPKLQLWTNGSVAYSVARELDQKDEEPLPKARSGCNLT) are cytoplasmic.

It belongs to the major facilitator superfamily. Monocarboxylate porter (TC 2.A.1.13) family. Interacts with isoform 2 of BSG; this interaction is required for its localization to the plasma membrane. As to expression, highly expressed in the lung, liver, kidney, and pancreas. Expressed in eye lens.

The protein localises to the cell membrane. It localises to the basolateral cell membrane. It carries out the reaction creatine(in) = creatine(out). It catalyses the reaction guanidinoacetate(in) = guanidinoacetate(out). Its activity is regulated as follows. Creatine uptake is inhibited by carbonyl cyanide 3-chlorophenylhydrazone (CCCP) and by valinomycin. Functionally, functions as a transporter for creatine and as well for its precursor guanidinoacetate. Transport of creatine and GAA is independent of resting membrane potential and extracellular Na(+), Cl(-), or pH. Contributes to the process of creatine biosynthesis and distribution. In Mus musculus (Mouse), this protein is Monocarboxylate transporter 12.